Here is a 466-residue protein sequence, read N- to C-terminus: Cysteine--tRNA ligase (466 aa).

Cys28 is a binding site for Zn(2+). Residues 30–40 (PTVYNYIHIGN) carry the 'HIGH' region motif. Zn(2+)-binding residues include Cys208, His233, and Glu237. Residues 265-269 (KMSKS) carry the 'KMSKS' region motif. Lys268 contacts ATP.

Belongs to the class-I aminoacyl-tRNA synthetase family. Monomer. Requires Zn(2+) as cofactor.

It localises to the cytoplasm. The enzyme catalyses tRNA(Cys) + L-cysteine + ATP = L-cysteinyl-tRNA(Cys) + AMP + diphosphate. In Staphylococcus carnosus (strain TM300), this protein is Cysteine--tRNA ligase.